We begin with the raw amino-acid sequence, 63 residues long: Cysteine-rich venom protein 3 (63 aa).

Residues 1–25 (MRKPITLILVVALALVLLATSEVSA) form the signal peptide. 3 disulfide bridges follow: Cys-29–Cys-43, Cys-36–Cys-48, and Cys-42–Cys-58.

Expressed by the venom gland.

It localises to the secreted. This chain is Cysteine-rich venom protein 3, found in Pimpla hypochondriaca (Parasitoid wasp).